Here is a 400-residue protein sequence, read N- to C-terminus: Casein kinase I homolog hhp2 (400 aa).

The Protein kinase domain occupies 12–278; that stretch reads YRIGRKIGSG…YLRKLFRDLL (267 aa). ATP contacts are provided by residues 18–26 and lysine 41; that span reads IGSGSFGQI. Aspartate 131 acts as the Proton acceptor in catalysis. The segment at 330-352 is disordered; it reads PNYSSIPLPAERNPKTPQSFSTN.

It belongs to the protein kinase superfamily. CK1 Ser/Thr protein kinase family. Casein kinase I subfamily.

The protein localises to the nucleus. The enzyme catalyses L-seryl-[protein] + ATP = O-phospho-L-seryl-[protein] + ADP + H(+). The catalysed reaction is L-threonyl-[protein] + ATP = O-phospho-L-threonyl-[protein] + ADP + H(+). Functionally, involved in DNA repair. May regulate the activity of protein(s) involved in double strand break repair caused by gamma rays. In Schizosaccharomyces pombe (strain 972 / ATCC 24843) (Fission yeast), this protein is Casein kinase I homolog hhp2 (hhp2).